Here is a 241-residue protein sequence, read N- to C-terminus: GPI-anchored hemophore RBT5 (241 aa).

The signal sequence occupies residues 1–20 (MLALSLLSIVSIASAAGVTA). One can recognise a CFEM domain in the interval 26–137 (NPYTIFPSVA…DALAKAADAA (112 aa)). Cystine bridges form between Cys54–Cys94, Cys58–Cys89, Cys68–Cys75, and Cys77–Cys110. Asp72 provides a ligand contact to heme. Low complexity-rich tracts occupy residues 140 to 154 (TTAESTTAESTAAET) and 163 to 182 (KETTAAETSKAAESSAPAET). A disordered region spans residues 140–210 (TTAESTTAES…SVAQSSSSAA (71 aa)). Residues 183 to 199 (SKAEETSKAAETTKAEE) are compositionally biased toward basic and acidic residues. Over residues 200–210 (SSVAQSSSSAA) the composition is skewed to low complexity. Asn221 carries GPI-anchor amidated asparagine lipidation. The propeptide at 222-241 (AGNMPAVAIGGVIAAVAALF) is removed in mature form.

This sequence belongs to the RBT5 family. Interacts with PGA7. Post-translationally, the GPI-anchor is attached to the protein in the endoplasmic reticulum and serves to target the protein to the cell surface. There, the glucosamine-inositol phospholipid moiety is cleaved off and the GPI-modified mannoprotein is covalently attached via its lipidless GPI glycan remnant to the 1,6-beta-glucan of the outer cell wall layer. In terms of processing, mannosylated.

The protein localises to the secreted. It is found in the cell wall. It localises to the cell membrane. Functionally, GPI-linked hyphal surface heme-binding protein involved in heme-iron utilization. Heme transfer occurs between PGA7, RBT5 and CSA2 supporting a model in which the 3 CFEM proteins cooperate in a heme-acquisition system and form a cross-cell wall heme-transfer cascade. The ability to acquire iron from host tissues is a major virulence factor of pathogenic microorganisms. Required for biofilm formation. The chain is GPI-anchored hemophore RBT5 from Candida albicans (strain SC5314 / ATCC MYA-2876) (Yeast).